An 807-amino-acid polypeptide reads, in one-letter code: MRVSISWLKQLVQVNESVDDLSERLSMAGFEVDDVDDLSARAQGVVVGNVLEREKHPNADKLSVCKVDVGAQAPIQIVCGASNVRSGIHVPVAMVGATLPAVGLTIKAGELRGVASNGMICSLTELGLTEQSDGIAILDELDESLPPNGSPVAPLLGLDDTVLELAITANRPDGLSMVGIAREVAALTGGSLSLPELDLDPSTSPLTTELDGCFYTITRIEGVDGSKPSPTWLQQRLERGGVNSVNAVVDVTNLVMLEQGQPLHAFDADALEQLTGQPVDAKSFAVRSARDGEIFVGLDDQKRTLDSRVQVVTCHDRPVAVAGVMGSLESGVTASTRNIWLESALFAPPRVRHSARALGLRTDASSRFEKGLPVEMTLPCSARASALLSQEFSCSESGRWVGGSGPAEAGPVLLRRSALHQLLGPLDAADGPEDLDDTSIENCLTALGCQLSAHEQGWEVMAPPSRRQDLQREVDLIEEVARLVGFDRFGAHLPDPLEPGALTPRQQAERRLRQLFCATGLQEVTTLSLVPASEQEQRIAISNPLLADTSHLRTNLWEEHLQICVRNLKASQRGCSVFEIGNTYSGSPEAVSQKAVLAGVICGDRRLSTWATSGKPQAPDYFQARGVLTRVMEALQLELSDRRLTDDARLHPGRAATLVLEGRPLGCFGQLHPAMAEELDLPEATYLFELDLARLLDAATRSNRWTPSFKPYPTVPFSERDLAVIVDRSSAATDLIQAIRKAGKPLLEQVELVDRFEGEQLGDNKVSQAFRLRYRGKNETLTDDKIQPVHDKVRAALSKQFQAELRS.

One can recognise a tRNA-binding domain in the interval 39–153 (SARAQGVVVG…SLPPNGSPVA (115 aa)). The B5 domain maps to 407–491 (AEAGPVLLRR…RLVGFDRFGA (85 aa)). The Mg(2+) site is built by Asp-469, Asp-475, Glu-478, and Glu-479. In terms of domain architecture, FDX-ACB spans 713–806 (PTVPFSERDL…LSKQFQAELR (94 aa)).

It belongs to the phenylalanyl-tRNA synthetase beta subunit family. Type 1 subfamily. As to quaternary structure, tetramer of two alpha and two beta subunits. Requires Mg(2+) as cofactor.

It is found in the cytoplasm. The catalysed reaction is tRNA(Phe) + L-phenylalanine + ATP = L-phenylalanyl-tRNA(Phe) + AMP + diphosphate + H(+). The chain is Phenylalanine--tRNA ligase beta subunit from Synechococcus sp. (strain CC9605).